The chain runs to 624 residues: Actin-related protein 8 (624 aa).

Residue Met1 is modified to N-acetylmethionine. The span at 1–25 (MTQAEKGDTENGKEKGGEKEKEQRG) shows a compositional bias: basic and acidic residues. A disordered region spans residues 1–29 (MTQAEKGDTENGKEKGGEKEKEQRGVKRP). Positions 55 and 56 each coordinate ATP. A Phosphoserine modification is found at Ser132. Residue 283-286 (DVGD) participates in ATP binding. Residue Ser412 is modified to Phosphoserine. The tract at residues 430–462 (SKQEQSAKATADRKSASKPIGFEGDLRGQSSDL) is disordered.

It belongs to the actin family. ARP8 subfamily. Component of the chromatin remodeling INO80 complex; specifically part of a complex module associated with the DBINO domain of INO80. Interacts with ACTR5; the interaction is observed in asynchronous (interphase) cells but not in metaphase-arrested cells indicative for a possible dissociation of the INO80 complex in mitotic cells. Exists as monomers and dimers, but the dimer is most probably the biologically relevant form required for stable interactions with histones that exploits the twofold symmetry of the nucleosome core.

The protein resides in the nucleus. It localises to the chromosome. In terms of biological role, plays an important role in the functional organization of mitotic chromosomes. Exhibits low basal ATPase activity, and unable to polymerize. Proposed core component of the chromatin remodeling INO80 complex which is involved in transcriptional regulation, DNA replication and probably DNA repair. Required for the recruitment of INO80 (and probably the INO80 complex) to sites of DNA damage. Strongly prefer nucleosomes and H3-H4 tetramers over H2A-H2B dimers, suggesting it may act as a nucleosome recognition module within the complex. This Homo sapiens (Human) protein is Actin-related protein 8 (ACTR8).